Reading from the N-terminus, the 255-residue chain is Myb-related protein Zm38 (255 aa).

HTH myb-type domains lie at 9–61 (KAHT…INYL) and 62–116 (RPDL…RRKL). 2 consecutive DNA-binding regions (H-T-H motif) follow at residues 37–61 (WRSL…INYL) and 89–112 (WSLI…NTHV).

The protein resides in the nucleus. Transcription factor that negatively regulates genes involved in anthocyanin biosynthesis. This is Myb-related protein Zm38 from Zea mays (Maize).